Reading from the N-terminus, the 167-residue chain is Inclusion membrane protein G (167 aa).

The next 2 membrane-spanning stretches (helical) occupy residues Val-33–Phe-57 and Val-63–Leu-88. Residues Ser-94–Phe-167 are sufficient for interaction with human 14-3-3 beta protein. Residues Lys-97–Phe-167 form a disordered region. The segment covering Glu-122 to Leu-135 has biased composition (low complexity). The Phosphorylation-dependent binding motif motif lies at Arg-161–Ser-166. Ser-166 is modified (phosphoserine).

In terms of assembly, in infected HeLa cells colocalizes with host 14-3-3 protein (YWHAB); phosphorylation of Ser-166 is probably required. Interacts with Pkn1. Phosphorylated, possibly at more than one position, in infected HeLa cells. Phosphorylated by chlamydial kinase Pnk1.

It localises to the secreted. Its subcellular location is the host vacuole. The protein resides in the host pathogen-containing vacuole. It is found in the host pathogen-containing vacuole membrane. In terms of biological role, inclusion membrane protein probably involved in early modification events of the chlamydial inclusion. The chain is Inclusion membrane protein G from Chlamydia trachomatis serovar L2 (strain ATCC VR-902B / DSM 19102 / 434/Bu).